A 94-amino-acid polypeptide reads, in one-letter code: Trp operon repressor homolog (94 aa).

A DNA-binding region spans residues 58 to 81 (QREIAEKYGVSIAQITRGSNALKG).

This sequence belongs to the TrpR family. As to quaternary structure, homodimer.

The protein resides in the cytoplasm. This protein is an aporepressor. When complexed with L-tryptophan it binds the operator region of the trp operon and prevents the initiation of transcription. The chain is Trp operon repressor homolog from Chlamydia trachomatis serovar A (strain ATCC VR-571B / DSM 19440 / HAR-13).